Here is a 354-residue protein sequence, read N- to C-terminus: Hyaluronan and proteoglycan link protein 1 (354 aa).

A propeptide spanning residues 1–9 (MRSLLFLVL) is cleaved from the precursor. In terms of domain architecture, Ig-like V-type spans 38–152 (PRLLVEAEQA…EGLEDDTAVV (115 aa)). The N-linked (GlcNAc...) asparagine glycan is linked to Asn56. 5 cysteine pairs are disulfide-bonded: Cys61/Cys139, Cys181/Cys252, Cys205/Cys226, Cys279/Cys349, and Cys304/Cys325. Link domains follow at residues 159–254 (VVFP…FCFT) and 259–351 (GRFY…YCFR).

The protein belongs to the HAPLN family.

The protein resides in the secreted. The protein localises to the extracellular space. It is found in the extracellular matrix. Its function is as follows. Stabilizes the aggregates of proteoglycan monomers with hyaluronic acid in the extracellular cartilage matrix. In Rattus norvegicus (Rat), this protein is Hyaluronan and proteoglycan link protein 1 (Hapln1).